Here is a 208-residue protein sequence, read N- to C-terminus: Outer-membrane lipoprotein carrier protein (208 aa).

The N-terminal stretch at 1–22 (MKKRLCAVLLASPLLFSAAVFA) is a signal peptide.

The protein belongs to the LolA family. Monomer.

It localises to the periplasm. In terms of biological role, participates in the translocation of lipoproteins from the inner membrane to the outer membrane. Only forms a complex with a lipoprotein if the residue after the N-terminal Cys is not an aspartate (The Asp acts as a targeting signal to indicate that the lipoprotein should stay in the inner membrane). The sequence is that of Outer-membrane lipoprotein carrier protein from Shewanella baltica (strain OS195).